The following is a 261-amino-acid chain: Acetylglutamate kinase (261 aa).

Substrate contacts are provided by residues 48–49 (GG), Arg-70, and Asn-164.

It belongs to the acetylglutamate kinase family. ArgB subfamily.

The protein resides in the cytoplasm. The catalysed reaction is N-acetyl-L-glutamate + ATP = N-acetyl-L-glutamyl 5-phosphate + ADP. It participates in amino-acid biosynthesis; L-arginine biosynthesis; N(2)-acetyl-L-ornithine from L-glutamate: step 2/4. Functionally, catalyzes the ATP-dependent phosphorylation of N-acetyl-L-glutamate. In Roseiflexus sp. (strain RS-1), this protein is Acetylglutamate kinase.